A 274-amino-acid chain; its full sequence is Undecaprenyl-diphosphatase (274 aa).

The next 6 helical transmembrane spans lie at Ala-44 to Trp-64, Leu-85 to Ile-105, Leu-109 to Ala-129, Ala-185 to Leu-205, Ala-215 to Val-235, and Phe-250 to Val-270.

Belongs to the UppP family.

It localises to the cell inner membrane. It carries out the reaction di-trans,octa-cis-undecaprenyl diphosphate + H2O = di-trans,octa-cis-undecaprenyl phosphate + phosphate + H(+). Catalyzes the dephosphorylation of undecaprenyl diphosphate (UPP). Confers resistance to bacitracin. This chain is Undecaprenyl-diphosphatase, found in Acidovorax ebreus (strain TPSY) (Diaphorobacter sp. (strain TPSY)).